We begin with the raw amino-acid sequence, 94 residues long: Large ribosomal subunit protein bL27 (94 aa).

A propeptide spanning residues 1–9 is cleaved from the precursor; that stretch reads MNLANLQLF. The segment at 11–34 is disordered; that stretch reads HKKGGGSTSNGRDSQAKRLGAKAA.

Belongs to the bacterial ribosomal protein bL27 family. In terms of processing, the N-terminus is cleaved by ribosomal processing cysteine protease Prp.

The sequence is that of Large ribosomal subunit protein bL27 from Streptococcus pyogenes serotype M3 (strain ATCC BAA-595 / MGAS315).